A 520-amino-acid polypeptide reads, in one-letter code: 3-phosphoshikimate 1-carboxyvinyltransferase, chloroplastic (520 aa).

A chloroplast-targeting transit peptide spans M1–E76. Residues L20–H39 are disordered. Positions 99, 100, and 104 each coordinate 3-phosphoshikimate. K99 provides a ligand contact to phosphoenolpyruvate. Phosphoenolpyruvate contacts are provided by G177 and R207. Residues S254, S255, Q256, S282, D407, and K434 each coordinate 3-phosphoshikimate. Residue Q256 participates in phosphoenolpyruvate binding. The active-site Proton acceptor is D407. Phosphoenolpyruvate is bound by residues R438, R480, and K505.

Belongs to the EPSP synthase family.

The protein resides in the plastid. It localises to the chloroplast. It catalyses the reaction 3-phosphoshikimate + phosphoenolpyruvate = 5-O-(1-carboxyvinyl)-3-phosphoshikimate + phosphate. Its pathway is metabolic intermediate biosynthesis; chorismate biosynthesis; chorismate from D-erythrose 4-phosphate and phosphoenolpyruvate: step 6/7. Catalyzes the transfer of the enolpyruvyl moiety of phosphoenolpyruvate (PEP) to the 5-hydroxyl of shikimate-3-phosphate (S3P) to produce enolpyruvyl shikimate-3-phosphate and inorganic phosphate. This Arabidopsis thaliana (Mouse-ear cress) protein is 3-phosphoshikimate 1-carboxyvinyltransferase, chloroplastic.